The chain runs to 172 residues: Major exported protein (172 aa).

This sequence belongs to the hcp1 family.

Its subcellular location is the secreted. The polypeptide is Major exported protein (hcpA) (Pseudomonas aeruginosa (strain ATCC 15692 / DSM 22644 / CIP 104116 / JCM 14847 / LMG 12228 / 1C / PRS 101 / PAO1)).